Reading from the N-terminus, the 292-residue chain is MLRIYADLTKFGIVVFSVLAGLAGYATGFQIENPFDWKIFLETLLGIYFLSSGSLALNQVQDWKIDQKMPRTAKRPIPSGKIKPAAAGILSVGLLLVGMNMLFKLEPVAGWVGLFCVFLYNGPYTLWWKRRWVFAAVPGAIPGALPVTIGYAVANPDIFNSESLYLFLIMFLWQMPHFWVLAIRYKDDYAAGGIPTLPVALGMEKTMFQVGLYTLVYVGVALAAPMFVHASWMFVLLTFPFVFKVLQEFYRYYKSNGTERWLAFFMWLNVSMLVFIIIPVIDKWNFLFIHHN.

Helical transmembrane passes span 11–31 (FGIVVFSVLAGLAGYATGFQI), 37–57 (WKIFLETLLGIYFLSSGSLAL), 85–105 (AAAGILSVGLLLVGMNMLFKL), 108–128 (VAGWVGLFCVFLYNGPYTLWW), 133–153 (VFAAVPGAIPGALPVTIGYAV), 163–183 (SLYLFLIMFLWQMPHFWVLAI), 199–219 (VALGMEKTMFQVGLYTLVYVG), 223–243 (AAPMFVHASWMFVLLTFPFVF), and 261–281 (WLAFFMWLNVSMLVFIIIPVI).

It belongs to the UbiA prenyltransferase family. Protoheme IX farnesyltransferase subfamily.

It localises to the cell inner membrane. The enzyme catalyses heme b + (2E,6E)-farnesyl diphosphate + H2O = Fe(II)-heme o + diphosphate. It participates in porphyrin-containing compound metabolism; heme O biosynthesis; heme O from protoheme: step 1/1. In terms of biological role, converts heme B (protoheme IX) to heme O by substitution of the vinyl group on carbon 2 of heme B porphyrin ring with a hydroxyethyl farnesyl side group. This is Protoheme IX farnesyltransferase from Bdellovibrio bacteriovorus (strain ATCC 15356 / DSM 50701 / NCIMB 9529 / HD100).